Consider the following 265-residue polypeptide: 3-methyl-2-oxobutanoate hydroxymethyltransferase (265 aa).

Residues Asp45 and Asp84 each contribute to the Mg(2+) site. Residues 45 to 46, Asp84, and Lys112 contribute to the 3-methyl-2-oxobutanoate site; that span reads DS. A Mg(2+)-binding site is contributed by Glu114. Catalysis depends on Glu181, which acts as the Proton acceptor.

This sequence belongs to the PanB family. As to quaternary structure, homodecamer; pentamer of dimers. The cofactor is Mg(2+).

It localises to the cytoplasm. The catalysed reaction is 3-methyl-2-oxobutanoate + (6R)-5,10-methylene-5,6,7,8-tetrahydrofolate + H2O = 2-dehydropantoate + (6S)-5,6,7,8-tetrahydrofolate. It participates in cofactor biosynthesis; (R)-pantothenate biosynthesis; (R)-pantoate from 3-methyl-2-oxobutanoate: step 1/2. Catalyzes the reversible reaction in which hydroxymethyl group from 5,10-methylenetetrahydrofolate is transferred onto alpha-ketoisovalerate to form ketopantoate. This Yersinia pseudotuberculosis serotype O:1b (strain IP 31758) protein is 3-methyl-2-oxobutanoate hydroxymethyltransferase.